The following is a 198-amino-acid chain: Superoxide dismutase [Fe] (198 aa).

Residues H27, H74, D157, and H161 each contribute to the Fe(3+) site.

This sequence belongs to the iron/manganese superoxide dismutase family. Homodimer. Fe(3+) serves as cofactor.

The catalysed reaction is 2 superoxide + 2 H(+) = H2O2 + O2. In terms of biological role, destroys superoxide anion radicals which are normally produced within the cells and which are toxic to biological systems. The protein is Superoxide dismutase [Fe] (sodB) of Pseudomonas putida (Arthrobacter siderocapsulatus).